Consider the following 274-residue polypeptide: Pyrroline-5-carboxylate reductase 3 (274 aa).

N-acetylalanine is present on A2.

Belongs to the pyrroline-5-carboxylate reductase family. Homodecamer; composed of 5 homodimers.

Its subcellular location is the cytoplasm. The catalysed reaction is L-proline + NADP(+) = (S)-1-pyrroline-5-carboxylate + NADPH + 2 H(+). It carries out the reaction L-proline + NAD(+) = (S)-1-pyrroline-5-carboxylate + NADH + 2 H(+). It functions in the pathway amino-acid biosynthesis; L-proline biosynthesis; L-proline from L-glutamate 5-semialdehyde: step 1/1. Functionally, oxidoreductase that catalyzes the last step in proline biosynthesis, which corresponds to the reduction of pyrroline-5-carboxylate (P5C) to L-proline using NAD(P)H. Proline is synthesized from either glutamate or ornithine; both are converted to P5C, and then to proline via pyrroline-5-carboxylate reductases (PYCRs). PYCR3 is exclusively linked to the biosynthesis of proline from ornithine. The polypeptide is Pyrroline-5-carboxylate reductase 3 (Macaca fascicularis (Crab-eating macaque)).